Here is a 180-residue protein sequence, read N- to C-terminus: Non-specific lipid transfer protein GPI-anchored 3 (180 aa).

Positions 1–22 (MEAVRFAVAVVLVFCYVTSSNA) are cleaved as a signal peptide. 4 cysteine pairs are disulfide-bonded: Cys-41-Cys-78, Cys-48-Cys-62, Cys-63-Cys-104, and Cys-76-Cys-113. Asn-91 and Asn-120 each carry an N-linked (GlcNAc...) asparagine glycan. Composition is skewed to low complexity over residues 116–125 (SAGTNSSSTP) and 133–156 (PASS…TAKP). The disordered stretch occupies residues 116-156 (SAGTNSSSTPPATPKTPPASSTSTGTGSGSTGNAAPSTAKP). Residue Ser-158 is the site of GPI-anchor amidated serine attachment. Residues 159–180 (SAPAINFGGLSFASAVVATLFF) constitute a propeptide, removed in mature form.

This sequence belongs to the plant LTP family. Restricted to stamen, pollen and sporophytic tissues. Also detected, at low levels, in stems and leaves.

It localises to the cell membrane. Its function is as follows. Lipid transfer protein involved in seed and ovule maturation and development, probably by regulating the fatty acids homeostasis during suberin and sporopollenin biosynthesis or deposition. In Arabidopsis thaliana (Mouse-ear cress), this protein is Non-specific lipid transfer protein GPI-anchored 3.